Here is a 794-residue protein sequence, read N- to C-terminus: Copper-exporting P-type ATPase (794 aa).

HMA domains are found at residues 4–69 and 71–137; these read TTLT…YDVA and EQVE…YDAE. Residues C15, C18, C82, and C85 each contribute to the Cu(+) site. The next 6 membrane-spanning stretches (helical) occupy residues 161 to 181, 186 to 206, 225 to 245, 255 to 275, 410 to 430, and 437 to 457; these read IISAILSLPLLLVMVVHISPI, ILVNPWVQLILSTPVQFIIGW, VLVAVGTSAAYFYSIYEMMMW, LYFETSAILITLILLGKYLEA, YFVPIVVSIAVITFIIWIIFV, and PALVSAISVLVIACPCALGLA. D494 (4-aspartylphosphate intermediate) is an active-site residue. Mg(2+) is bound by residues D689 and D693. Transmembrane regions (helical) follow at residues 747–767 and 773–789; these read LFWAFGYNVAGIPIAACGLLA and AAMALSSVSVVMNALRL.

Belongs to the cation transport ATPase (P-type) (TC 3.A.3) family. Type IB subfamily.

Its subcellular location is the cell membrane. It carries out the reaction Cu(+)(in) + ATP + H2O = Cu(+)(out) + ADP + phosphate + H(+). In terms of biological role, involved in copper export. The polypeptide is Copper-exporting P-type ATPase (copA) (Staphylococcus epidermidis (strain ATCC 35984 / DSM 28319 / BCRC 17069 / CCUG 31568 / BM 3577 / RP62A)).